An 88-amino-acid polypeptide reads, in one-letter code: MSLLSFLLGEKKKTASVAKERLQIILAHERSGRGGSRPDYLEALQRELVAVISKYVSIKPEDIKVHLQKQDNLEVLEVKLELPEAARG.

This sequence belongs to the MinE family.

Prevents the cell division inhibition by proteins MinC and MinD at internal division sites while permitting inhibition at polar sites. This ensures cell division at the proper site by restricting the formation of a division septum at the midpoint of the long axis of the cell. This Methylibium petroleiphilum (strain ATCC BAA-1232 / LMG 22953 / PM1) protein is Cell division topological specificity factor.